The chain runs to 191 residues: Probable GTP-binding protein EngB (191 aa).

One can recognise an EngB-type G domain in the interval 19–188; sequence NIPEICFMGR…HKKIFELFVE (170 aa). Residues 27–34, 53–57, 70–73, 136–139, and 167–169 contribute to the GTP site; these read GRSNVGKS, GRTQL, DLPG, NKFD, and AST. Mg(2+)-binding residues include serine 34 and threonine 55.

This sequence belongs to the TRAFAC class TrmE-Era-EngA-EngB-Septin-like GTPase superfamily. EngB GTPase family. Mg(2+) is required as a cofactor.

Necessary for normal cell division and for the maintenance of normal septation. The sequence is that of Probable GTP-binding protein EngB from Mycoplasma genitalium (strain ATCC 33530 / DSM 19775 / NCTC 10195 / G37) (Mycoplasmoides genitalium).